The chain runs to 382 residues: Flap endonuclease 1-A (382 aa).

Residues 1–104 form an N-domain region; it reads MGIHGLAKLI…GELAKRSERR (104 aa). Mg(2+) is bound at residue aspartate 34. DNA is bound by residues arginine 47 and arginine 70. Mg(2+) is bound by residues aspartate 86, glutamate 158, glutamate 160, aspartate 179, and aspartate 181. Positions 122 to 253 are I-domain; sequence NIEKFTKRLV…KRAIDLIRQH (132 aa). Glutamate 158 provides a ligand contact to DNA. 2 residues coordinate DNA: glycine 231 and aspartate 233. Position 233 (aspartate 233) interacts with Mg(2+). The tract at residues 336–344 is interaction with PCNA; sequence TQGRLDDFF. Residues 350 to 382 are disordered; the sequence is VSSTKRKEAESKGSAKKKAKTGGTPAGKFKRGK.

The protein belongs to the XPG/RAD2 endonuclease family. FEN1 subfamily. Interacts with PCNA. Three molecules of fen1 bind to one PCNA trimer with each molecule binding to one PCNA monomer. PCNA stimulates the nuclease activity without altering cleavage specificity. Requires Mg(2+) as cofactor. In terms of processing, phosphorylated. Phosphorylation upon DNA damage induces relocalization to the nuclear plasma.

It is found in the nucleus. The protein localises to the nucleolus. It localises to the nucleoplasm. Its subcellular location is the mitochondrion. Its function is as follows. Structure-specific nuclease with 5'-flap endonuclease and 5'-3' exonuclease activities involved in DNA replication and repair. During DNA replication, cleaves the 5'-overhanging flap structure that is generated by displacement synthesis when DNA polymerase encounters the 5'-end of a downstream Okazaki fragment. It enters the flap from the 5'-end and then tracks to cleave the flap base, leaving a nick for ligation. Also involved in the long patch base excision repair (LP-BER) pathway, by cleaving within the apurinic/apyrimidinic (AP) site-terminated flap. Acts as a genome stabilization factor that prevents flaps from equilibrating into structures that lead to duplications and deletions. Also possesses 5'-3' exonuclease activity on nicked or gapped double-stranded DNA, and exhibits RNase H activity. Also involved in replication and repair of rDNA and in repairing mitochondrial DNA. The chain is Flap endonuclease 1-A (fen1-a) from Xenopus laevis (African clawed frog).